We begin with the raw amino-acid sequence, 301 residues long: uncharacterized protein (301 aa).

The 59-residue stretch at Tyr-27–Leu-85 folds into the FHA domain. A disordered region spans residues Thr-187 to Ser-236. A Phosphoserine modification is found at Ser-204. The segment covering Lys-216–Leu-226 has biased composition (basic and acidic residues). Ser-231 carries the post-translational modification Phosphoserine.

As to quaternary structure, interacts with sad1.

It localises to the nucleus. This is an uncharacterized protein from Schizosaccharomyces pombe (strain 972 / ATCC 24843) (Fission yeast).